We begin with the raw amino-acid sequence, 258 residues long: Isoprenyl transferase (258 aa).

Residue Asp38 is part of the active site. Residue Asp38 coordinates Mg(2+). Residues 39–42, Trp43, Arg51, His55, and 83–85 each bind substrate; these read GNGR and STE. Asn86 functions as the Proton acceptor in the catalytic mechanism. Residues Trp87, Arg89, Arg206, and 212–214 contribute to the substrate site; that span reads RIS. Glu225 is a binding site for Mg(2+).

This sequence belongs to the UPP synthase family. As to quaternary structure, homodimer. Mg(2+) is required as a cofactor.

Its function is as follows. Catalyzes the condensation of isopentenyl diphosphate (IPP) with allylic pyrophosphates generating different type of terpenoids. This is Isoprenyl transferase from Bacillus cereus (strain ATCC 14579 / DSM 31 / CCUG 7414 / JCM 2152 / NBRC 15305 / NCIMB 9373 / NCTC 2599 / NRRL B-3711).